The sequence spans 66 residues: Large ribosomal subunit protein bL33c (66 aa).

The protein belongs to the bacterial ribosomal protein bL33 family.

It is found in the plastid. It localises to the chloroplast. This chain is Large ribosomal subunit protein bL33c, found in Aethionema grandiflorum (Persian stone-cress).